The chain runs to 147 residues: Hemoglobin subunit epsilon-1 (147 aa).

One can recognise a Globin domain in the interval 3–147; the sequence is HFTAEEKAAI…VATALAHKYH (145 aa). Positions 64 and 93 each coordinate heme b.

Belongs to the globin family. As to quaternary structure, heterotetramer of two epsilon chains and two alpha chains. As to expression, red blood cells.

Its function is as follows. Beta-type chain found in early embryos. The chain is Hemoglobin subunit epsilon-1 (HBE1) from Capra hircus (Goat).